The chain runs to 929 residues: Isoleucine--tRNA ligase (929 aa).

The 'HIGH' region motif lies at 58–68 (PYANGDIHIGH). L-isoleucyl-5'-AMP is bound at residue Glu-563. The short motif at 605 to 609 (KMSKS) is the 'KMSKS' region element. Lys-608 contributes to the ATP binding site. Cys-892, Cys-895, Cys-912, and Cys-915 together coordinate Zn(2+).

The protein belongs to the class-I aminoacyl-tRNA synthetase family. IleS type 1 subfamily. Monomer. Requires Zn(2+) as cofactor.

Its subcellular location is the cytoplasm. The enzyme catalyses tRNA(Ile) + L-isoleucine + ATP = L-isoleucyl-tRNA(Ile) + AMP + diphosphate. Functionally, catalyzes the attachment of isoleucine to tRNA(Ile). As IleRS can inadvertently accommodate and process structurally similar amino acids such as valine, to avoid such errors it has two additional distinct tRNA(Ile)-dependent editing activities. One activity is designated as 'pretransfer' editing and involves the hydrolysis of activated Val-AMP. The other activity is designated 'posttransfer' editing and involves deacylation of mischarged Val-tRNA(Ile). This is Isoleucine--tRNA ligase from Neisseria meningitidis serogroup C (strain 053442).